A 583-amino-acid chain; its full sequence is Laccase-14 (583 aa).

Positions 1 to 30 (MAPSLGSGSTRILLIVSLLLCLRQQAVVDA) are cleaved as a signal peptide. 2 Plastocyanin-like domains span residues 38 to 158 (HVGN…PRPG) and 168 to 320 (AEHT…YDDD). N-linked (GlcNAc...) asparagine glycosylation is found at N41 and N84. H88 and H90 together coordinate Cu cation. An N-linked (GlcNAc...) asparagine glycan is attached at N126. Positions 137 and 139 each coordinate Cu cation. N-linked (GlcNAc...) asparagine glycosylation is found at N179, N251, N304, N338, N388, N400, N446, and N464. One can recognise a Plastocyanin-like 3 domain in the interval 426-567 (DFPDRPPVMF…AMAFDVQDGP (142 aa)). Positions 482, 485, 487, 546, 547, 548, and 552 each coordinate Cu cation.

Belongs to the multicopper oxidase family. Cu cation is required as a cofactor.

Its subcellular location is the secreted. It is found in the extracellular space. It localises to the apoplast. The enzyme catalyses 4 hydroquinone + O2 = 4 benzosemiquinone + 2 H2O. Lignin degradation and detoxification of lignin-derived products. The polypeptide is Laccase-14 (LAC14) (Oryza sativa subsp. japonica (Rice)).